The following is a 254-amino-acid chain: 3-oxo-5-alpha-steroid 4-dehydrogenase 2 (254 aa).

Transmembrane regions (helical) follow at residues 8-28 (VPVL…LCFG), 72-92 (PRSL…AHYF), 146-166 (FSVG…SDCM), and 206-226 (LATW…FLGM).

Belongs to the steroid 5-alpha reductase family.

It is found in the microsome membrane. The protein resides in the endoplasmic reticulum membrane. The catalysed reaction is a 3-oxo-5alpha-steroid + NADP(+) = a 3-oxo-Delta(4)-steroid + NADPH + H(+). It catalyses the reaction 17beta-hydroxy-5alpha-androstan-3-one + NADP(+) = testosterone + NADPH + H(+). It carries out the reaction 5alpha-pregnane-3,20-dione + NADP(+) = progesterone + NADPH + H(+). Functionally, converts testosterone (T) into 5-alpha-dihydrotestosterone (DHT) and progesterone or corticosterone into their corresponding 5-alpha-3-oxosteroids. It plays a central role in sexual differentiation and androgen physiology. The sequence is that of 3-oxo-5-alpha-steroid 4-dehydrogenase 2 (Srd5a2) from Mus musculus (Mouse).